The chain runs to 313 residues: Olfactory receptor 10K1 (313 aa).

Over 1 to 25 (MEQVNKTVVREFVVLGFSSLARLQQ) the chain is Extracellular. The N-linked (GlcNAc...) asparagine glycan is linked to N5. Residues 26–46 (LLFVIFLLLYLFTLGTNAIII) form a helical membrane-spanning segment. Residues 47–54 (STIVLDRA) lie on the Cytoplasmic side of the membrane. A helical membrane pass occupies residues 55–75 (LHTPMYFFLAILSCSEICYTF). The Extracellular portion of the chain corresponds to 76 to 99 (VIVPKMLVDLLSQKKTISFLGCAI). Residues 100–120 (QMFSFLFFGSSHSFLLAAMGY) traverse the membrane as a helical segment. The Cytoplasmic portion of the chain corresponds to 121–139 (DRYMAICNPLRYSVLMGHG). The helical transmembrane segment at 140–160 (VCMGLMAAACACGFTVSLVTT) threads the bilayer. The Extracellular segment spans residues 161–197 (SLVFHLPFHSSNQLHHFFCDISPVLKLASQHSGFSQL). Residues 198–217 (VIFMLGVFALVIPLLLILVS) traverse the membrane as a helical segment. The Cytoplasmic segment spans residues 218–237 (YIRIISAILKIPSSVGRYKT). Residues 238-258 (FSTCASHLIVVTVHYSCASFI) form a helical membrane-spanning segment. At 259 to 271 (YLRPKTNYTSSQD) the chain is on the extracellular side. N-linked (GlcNAc...) asparagine glycosylation occurs at N265. Residues 272 to 292 (TLISVSYTILTPLFNPMIYSL) traverse the membrane as a helical segment. The Cytoplasmic portion of the chain corresponds to 293–313 (RNKEFKSALRRTIGQTFYPLS).

It belongs to the G-protein coupled receptor 1 family.

The protein localises to the cell membrane. Odorant receptor. This is Olfactory receptor 10K1 (OR10K1) from Homo sapiens (Human).